The sequence spans 252 residues: Octanoyltransferase (252 aa).

Residues 1-21 are compositionally biased toward low complexity; the sequence is MPSAPAAPAAPAAPDAAASVA. A disordered region spans residues 1–22; sequence MPSAPAAPAAPAAPDAAASVAP. The 182-residue stretch at 56-237 folds into the BPL/LPL catalytic domain; the sequence is PDTDDEIWVV…RLIAHLDGAT (182 aa). Residues 96–103, 168–170, and 181–183 contribute to the substrate site; these read RGGQITYH, ALG, and GLS. Cys199 (acyl-thioester intermediate) is an active-site residue.

The protein belongs to the LipB family.

Its subcellular location is the cytoplasm. It catalyses the reaction octanoyl-[ACP] + L-lysyl-[protein] = N(6)-octanoyl-L-lysyl-[protein] + holo-[ACP] + H(+). It participates in protein modification; protein lipoylation via endogenous pathway; protein N(6)-(lipoyl)lysine from octanoyl-[acyl-carrier-protein]: step 1/2. Its function is as follows. Catalyzes the transfer of endogenously produced octanoic acid from octanoyl-acyl-carrier-protein onto the lipoyl domains of lipoate-dependent enzymes. Lipoyl-ACP can also act as a substrate although octanoyl-ACP is likely to be the physiological substrate. This Burkholderia pseudomallei (strain 668) protein is Octanoyltransferase.